We begin with the raw amino-acid sequence, 317 residues long: Glycerol-3-phosphate dehydrogenase [NAD(P)+] (317 aa).

The NADPH site is built by Ser-14, Phe-15, Arg-35, and Lys-109. 2 residues coordinate sn-glycerol 3-phosphate: Lys-109 and Gly-137. Ala-141 serves as a coordination point for NADPH. Residues Lys-192, Asp-248, Ser-258, Arg-259, and Asn-260 each contribute to the sn-glycerol 3-phosphate site. Lys-192 (proton acceptor) is an active-site residue. An NADPH-binding site is contributed by Arg-259. The NADPH site is built by Leu-283 and Glu-285.

Belongs to the NAD-dependent glycerol-3-phosphate dehydrogenase family.

The protein localises to the cytoplasm. It carries out the reaction sn-glycerol 3-phosphate + NAD(+) = dihydroxyacetone phosphate + NADH + H(+). The enzyme catalyses sn-glycerol 3-phosphate + NADP(+) = dihydroxyacetone phosphate + NADPH + H(+). The protein operates within membrane lipid metabolism; glycerophospholipid metabolism. Catalyzes the reduction of the glycolytic intermediate dihydroxyacetone phosphate (DHAP) to sn-glycerol 3-phosphate (G3P), the key precursor for phospholipid synthesis. In Rickettsia akari (strain Hartford), this protein is Glycerol-3-phosphate dehydrogenase [NAD(P)+].